A 499-amino-acid polypeptide reads, in one-letter code: Probable aspartyl protease At4g16563 (499 aa).

Positions 1 to 26 are cleaved as a signal peptide; it reads MKTCLIFFLYTTILQYYFHFSVSSLS. Residues 83 to 487 form the Peptidase A1 domain; sequence YLISLSVGSS…DLLNRRVGFA (405 aa). Asp-101 is a catalytic residue. A disulfide bond links Cys-111 and Cys-119. N-linked (GlcNAc...) asparagine glycans are attached at residues Asn-175 and Asn-211. Residue Asp-353 is part of the active site. Residues Cys-396 and Cys-445 are joined by a disulfide bond. Asn-400 and Asn-415 each carry an N-linked (GlcNAc...) asparagine glycan.

Belongs to the peptidase A1 family.

The polypeptide is Probable aspartyl protease At4g16563 (Arabidopsis thaliana (Mouse-ear cress)).